The chain runs to 686 residues: MIKANWTSTSAFNLELALDESRDWIERVINQKFPSDFQSSLRDGIFLCKLINQIQPNSVPKYNQSPSTDFAKRENIQLFIKSAKHSMGLRDTQLFESQDLFESIRIRNIAITLYWLGRAARASQTYKGPQLDLLKFQGMNCSACKKAITNNDYLTTMTQQFHTSCAVCCSCSCKLDPKKKFYQESNNFWCENCMLGATNLGGSNNSSGGKNKSNNNNNNKCSGCFGSLEKGYVPDENDKEKKYCTSCICDLCHDPLIGNFQVKDGKKVCDSCSCKSCGKSLEDGYYEEGISKYCEPCAKDRNKPKQVMDKDGHDHHHHNHNKPTTTTTTTNSNSPLAKKKSDSCKMCDKPVDNKTKKYGDDRDKYCTPHEKDGTCGKCNGELVGSAISVMDKNFHPQCFKCDSCNKNLNQNDQIKKSPTTGNPLCGPCSSNNNKSSKNCHDCKKPISGSSVEALDRPYHPNCLKCYSCSKNLKEDFTEVDNEPFCNPCASQLNQYTSGNQKQPKQGGSPFITSGWLDSDRCVVCVKPLNGEVAKIFDSFYHKGCFKCTDKSCNAPLLTGYFPHDKKPYCQKCSIKIQQSTTTDHCAKCSKPIIEGSILKVAGKVYHKSCYDNEKHTSSSSSSSSVNCFKCKSQITGTQFVRLDQKDYCMKCSPSASSSTTVTHGERLNYGMTVDPRSGKRVFNTSK.

In terms of domain architecture, Calponin-homology (CH) spans 15 to 120 (ELALDESRDW…ITLYWLGRAA (106 aa)). 2 LIM zinc-binding domains span residues 139 to 200 (MNCS…ATNL) and 219 to 279 (NKCS…SCGK). Residues 305 to 314 (KQVMDKDGHD) are compositionally biased toward basic and acidic residues. Positions 305–345 (KQVMDKDGHDHHHHNHNKPTTTTTTTNSNSPLAKKKSDSCK) are disordered. Positions 322–333 (KPTTTTTTTNSN) are enriched in low complexity. LIM zinc-binding domains follow at residues 373-435 (GTCG…NNKS), 437-495 (KNCH…LNQY), 519-579 (DRCV…IQQS), and 583-658 (DHCA…ASSS).

Interacts with limF and rab21.

Its function is as follows. Involved in the regulation of phagocytosis. May repress rab21. The polypeptide is Calponin homology and LIM domain-containing protein (ChLim) (Dictyostelium discoideum (Social amoeba)).